A 248-amino-acid polypeptide reads, in one-letter code: Triosephosphate isomerase (248 aa).

A substrate-binding site is contributed by 9–11; sequence NWK. His-101 acts as the Electrophile in catalysis. The active-site Proton acceptor is Glu-170. Residues Gly-176, Ser-208, and 229 to 230 each bind substrate; that span reads GG.

Belongs to the triosephosphate isomerase family. Homodimer.

It localises to the cytoplasm. It catalyses the reaction D-glyceraldehyde 3-phosphate = dihydroxyacetone phosphate. It functions in the pathway carbohydrate biosynthesis; gluconeogenesis. Its pathway is carbohydrate degradation; glycolysis; D-glyceraldehyde 3-phosphate from glycerone phosphate: step 1/1. Its function is as follows. Involved in the gluconeogenesis. Catalyzes stereospecifically the conversion of dihydroxyacetone phosphate (DHAP) to D-glyceraldehyde-3-phosphate (G3P). This Mycoplasmopsis pulmonis (strain UAB CTIP) (Mycoplasma pulmonis) protein is Triosephosphate isomerase.